The following is a 498-amino-acid chain: ATP synthase subunit beta, chloroplastic (498 aa).

Residue G172–T179 participates in ATP binding.

This sequence belongs to the ATPase alpha/beta chains family. In terms of assembly, F-type ATPases have 2 components, CF(1) - the catalytic core - and CF(0) - the membrane proton channel. CF(1) has five subunits: alpha(3), beta(3), gamma(1), delta(1), epsilon(1). CF(0) has four main subunits: a(1), b(1), b'(1) and c(9-12).

Its subcellular location is the plastid. The protein resides in the chloroplast thylakoid membrane. It carries out the reaction ATP + H2O + 4 H(+)(in) = ADP + phosphate + 5 H(+)(out). Its function is as follows. Produces ATP from ADP in the presence of a proton gradient across the membrane. The catalytic sites are hosted primarily by the beta subunits. In Solanum bulbocastanum (Wild potato), this protein is ATP synthase subunit beta, chloroplastic.